We begin with the raw amino-acid sequence, 184 residues long: Succinate dehydrogenase cytochrome b560 subunit, mitochondrial (184 aa).

Residues 65–94 (LTWMLSGFHRISGCVMAGTLLVGGLGFAVL) traverse the membrane as a helical segment. Over 95–114 (PLDFTTFVEYIRGWNLPCAV) the chain is Mitochondrial intermembrane. The chain crosses the membrane as a helical span at residues 115–139 (TAVFKYIIAFPIIFHTLNGIRFLGF). Position 129 (H129) interacts with heme. Over 140–147 (DLAKGVDN) the chain is Mitochondrial matrix. Residues 148 to 169 (IGQVYKSGWLVFGVSAVIALAI) traverse the membrane as a helical segment. The Mitochondrial intermembrane segment spans residues 170 to 172 (VIN).

This sequence belongs to the cytochrome b560 family. As to quaternary structure, component of complex II composed of four subunits: a flavoprotein (FP), iron-sulfur protein (IP), and a cytochrome b560 composed of two transmembrane proteins. Heme is required as a cofactor.

The protein localises to the mitochondrion inner membrane. It functions in the pathway carbohydrate metabolism; tricarboxylic acid cycle. Its function is as follows. Membrane-anchoring subunit of succinate dehydrogenase (SDH) that is involved in complex II of the mitochondrial electron transport chain and is responsible for transferring electrons from succinate to ubiquinone (coenzyme Q). Mediates resistance to enteropathogenic E.coli infection. The sequence is that of Succinate dehydrogenase cytochrome b560 subunit, mitochondrial (mev-1) from Caenorhabditis briggsae.